The primary structure comprises 218 residues: DNA-directed RNA polymerases IV and V subunit 5B (218 aa).

The protein belongs to the archaeal Rpo5/eukaryotic RPB5 RNA polymerase subunit family. In terms of assembly, component of the RNA polymerase IV and V complexes. Interacts with NRPD1. Expressed inleaves, flower buds, flowers and siliques.

The protein localises to the nucleus. DNA-dependent RNA polymerase catalyzes the transcription of DNA into RNA using the four ribonucleoside triphosphates as substrates. Component of RNA polymerases IV and V which mediate short-interfering RNAs (siRNA) accumulation and subsequent RNA-directed DNA methylation-dependent (RdDM) transcriptional gene silencing (TGS) of endogenous repeated sequences, including transposable elements. The polypeptide is DNA-directed RNA polymerases IV and V subunit 5B (NRPD5B) (Arabidopsis thaliana (Mouse-ear cress)).